We begin with the raw amino-acid sequence, 132 residues long: Tyrosine phosphatase-like protein N2 (132 aa).

The Tyrosine-protein phosphatase domain occupies 1 to 132 (MQGPMKNTVA…DILGRFQRVF (132 aa)).

The protein belongs to the protein-tyrosine phosphatase family.

The polypeptide is Tyrosine phosphatase-like protein N2 (N4) (Microplitis demolitor (Parasitoid wasp)).